Consider the following 274-residue polypeptide: Penicillin-insensitive murein endopeptidase (274 aa).

The N-terminal stretch at 1–19 (MKKTAIALLAWFVSSASLA) is a signal peptide. Cystine bridges form between C44/C265, C187/C235, and C216/C223. Zn(2+) contacts are provided by H110, H113, D120, D147, H150, and H211. Residues 225-274 (DQPLPPPGDGCGAELQSWFEPPKPGTTKPEKKTPPPLPPSCQALLDEHVL) are disordered.

It belongs to the peptidase M74 family. Dimer. Zn(2+) is required as a cofactor.

The protein localises to the periplasm. Its function is as follows. Murein endopeptidase that cleaves the D-alanyl-meso-2,6-diamino-pimelyl amide bond that connects peptidoglycan strands. Likely plays a role in the removal of murein from the sacculus. This Salmonella paratyphi A (strain AKU_12601) protein is Penicillin-insensitive murein endopeptidase.